The chain runs to 108 residues: Urease subunit beta (108 aa).

It belongs to the urease beta subunit family. Heterotrimer of UreA (gamma), UreB (beta) and UreC (alpha) subunits. Three heterotrimers associate to form the active enzyme.

Its subcellular location is the cytoplasm. It carries out the reaction urea + 2 H2O + H(+) = hydrogencarbonate + 2 NH4(+). It functions in the pathway nitrogen metabolism; urea degradation; CO(2) and NH(3) from urea (urease route): step 1/1. This chain is Urease subunit beta, found in Proteus hauseri.